Reading from the N-terminus, the 36-residue chain is Pancreatic polypeptide (36 aa).

The residue at position 36 (Phe-36) is a Phenylalanine amide.

Belongs to the NPY family.

It localises to the secreted. Its function is as follows. Hormone secreted by pancreatic cells that acts as a regulator of pancreatic and gastrointestinal functions. The chain is Pancreatic polypeptide (ppy) from Alligator mississippiensis (American alligator).